The following is a 235-amino-acid chain: Adenosine 5'-phosphosulfate reductase (235 aa).

[4Fe-4S] cluster-binding residues include Cys-121, Cys-122, Cys-204, and Cys-207. Cys-230 serves as the catalytic Nucleophile; cysteine thiosulfonate intermediate.

It belongs to the PAPS reductase family. CysH subfamily. The cofactor is [4Fe-4S] cluster.

It is found in the cytoplasm. The enzyme catalyses [thioredoxin]-disulfide + sulfite + AMP + 2 H(+) = adenosine 5'-phosphosulfate + [thioredoxin]-dithiol. Its pathway is sulfur metabolism; hydrogen sulfide biosynthesis; sulfite from sulfate. Its function is as follows. Catalyzes the formation of sulfite from adenosine 5'-phosphosulfate (APS) using thioredoxin as an electron donor. This Geobacillus kaustophilus (strain HTA426) protein is Adenosine 5'-phosphosulfate reductase.